The chain runs to 244 residues: Ferric aerobactin reductase IutB (244 aa).

Residues C220, C221, C232, and C235 each coordinate [2Fe-2S] cluster.

In terms of assembly, monomer. [2Fe-2S] cluster is required as a cofactor.

It localises to the cytoplasm. The catalysed reaction is 2 a Fe(II)-siderophore + NAD(+) + H(+) = 2 a Fe(III)-siderophore + NADH. It carries out the reaction 2 a Fe(II)-siderophore + NADP(+) + H(+) = 2 a Fe(III)-siderophore + NADPH. Functionally, ferric-siderophore reductase involved in iron removal from the siderophores after their transport into the cell. Acts as a major ferric-aerobactin reductase catalyzing the reduction of Fe(3+)-aerobactin, a citrate-hydroxamate siderophore produced by other bacteria. Catalyzes reduction of Fe(3+)-vulnibactin, a catecholate siderophore synthesized by V.vulnificus, in the absence of VuuB. Catalyzes reduction of ferrioxamine B and Fe(3+)-vibriobactin in vitro. No activity with Fe(3+)-enterobactin. Catalyzes reduction of ferric chelating compound Fe(3+)-nitrilotriacetic acid (NTA) in the presence of NADH, NADPH or reduced glutathione (GSH) as its electron donor in vitro. Also catalyzes reduction of ferric chelating compounds Fe(3+)-citrate and Fe(3+)-EDTA as well as non-complexed FeCl3 in the presence of GSH as its electron donor in vitro. Highest activity with Fe(3+)-NTA as electron acceptor and GSH as donor. In Vibrio vulnificus, this protein is Ferric aerobactin reductase IutB.